The following is a 101-amino-acid chain: Large ribosomal subunit protein uL23 (101 aa).

This sequence belongs to the universal ribosomal protein uL23 family. Part of the 50S ribosomal subunit. Contacts protein L29, and trigger factor when it is bound to the ribosome.

Its function is as follows. One of the early assembly proteins it binds 23S rRNA. One of the proteins that surrounds the polypeptide exit tunnel on the outside of the ribosome. Forms the main docking site for trigger factor binding to the ribosome. This is Large ribosomal subunit protein uL23 from Haemophilus ducreyi (strain 35000HP / ATCC 700724).